A 95-amino-acid polypeptide reads, in one-letter code: Aspartyl/glutamyl-tRNA(Asn/Gln) amidotransferase subunit C (95 aa).

The protein belongs to the GatC family. In terms of assembly, heterotrimer of A, B and C subunits.

It catalyses the reaction L-glutamyl-tRNA(Gln) + L-glutamine + ATP + H2O = L-glutaminyl-tRNA(Gln) + L-glutamate + ADP + phosphate + H(+). The enzyme catalyses L-aspartyl-tRNA(Asn) + L-glutamine + ATP + H2O = L-asparaginyl-tRNA(Asn) + L-glutamate + ADP + phosphate + 2 H(+). Its function is as follows. Allows the formation of correctly charged Asn-tRNA(Asn) or Gln-tRNA(Gln) through the transamidation of misacylated Asp-tRNA(Asn) or Glu-tRNA(Gln) in organisms which lack either or both of asparaginyl-tRNA or glutaminyl-tRNA synthetases. The reaction takes place in the presence of glutamine and ATP through an activated phospho-Asp-tRNA(Asn) or phospho-Glu-tRNA(Gln). The chain is Aspartyl/glutamyl-tRNA(Asn/Gln) amidotransferase subunit C from Trichlorobacter lovleyi (strain ATCC BAA-1151 / DSM 17278 / SZ) (Geobacter lovleyi).